Here is a 166-residue protein sequence, read N- to C-terminus: Ribosome maturation factor RimP (166 aa).

It belongs to the RimP family.

It is found in the cytoplasm. In terms of biological role, required for maturation of 30S ribosomal subunits. This Paramagnetospirillum magneticum (strain ATCC 700264 / AMB-1) (Magnetospirillum magneticum) protein is Ribosome maturation factor RimP.